A 395-amino-acid chain; its full sequence is DLYTSKGLFRAAVPSGASTGIYEALELRDNDKTRFMGKGVSKAVAHVNKTIAPALISKNISVVEQEKIDRLMLEMDGSENKSKFGANAILGVSLAVCKAGAAEKGVPLYRHIADLAGNPEVILPVPAFNVINGGSHAGNKLAMQEFMILPVGAESFKEAMRIGAEVYHNLKNVIKEKYGKDATNVGDEGGFAPNILENKEALELLKNAINKAGYSDKIVIGMDVAASEFYRDGKYDLDFKSPDDPSRYITPDQLADLYKSFVKNYPVVSIEDPFDQDDWAAWKKFTASVGIQVVGDDLTVTNPKRIAKAVDDKACNCLLLKVNQIGSVTESLQACKLAQSNGWGVMVSHRSGETEDTFIADLVVGLCTGQIKTGAPCRSERLAKYNQILRIEEEL.

Substrate is bound by residues histidine 136 and glutamate 145. Glutamate 188 (proton donor) is an active-site residue. The Mg(2+) site is built by aspartate 223, glutamate 271, and aspartate 296. Residues glutamate 271 and aspartate 296 each contribute to the substrate site. The active-site Proton acceptor is lysine 321. Residues 348 to 351 (SHRS) and lysine 372 contribute to the substrate site.

It belongs to the enolase family. In terms of assembly, homodimer. Requires Mg(2+) as cofactor.

Its subcellular location is the cytoplasm. The enzyme catalyses (2R)-2-phosphoglycerate = phosphoenolpyruvate + H2O. It participates in carbohydrate degradation; glycolysis; pyruvate from D-glyceraldehyde 3-phosphate: step 4/5. This Alligator mississippiensis (American alligator) protein is Enolase.